Reading from the N-terminus, the 306-residue chain is Ribosomal protein L11 methyltransferase (306 aa).

S-adenosyl-L-methionine contacts are provided by threonine 152, glycine 179, aspartate 201, and asparagine 243.

The protein belongs to the methyltransferase superfamily. PrmA family.

Its subcellular location is the cytoplasm. It carries out the reaction L-lysyl-[protein] + 3 S-adenosyl-L-methionine = N(6),N(6),N(6)-trimethyl-L-lysyl-[protein] + 3 S-adenosyl-L-homocysteine + 3 H(+). Its function is as follows. Methylates ribosomal protein L11. The protein is Ribosomal protein L11 methyltransferase of Citrifermentans bemidjiense (strain ATCC BAA-1014 / DSM 16622 / JCM 12645 / Bem) (Geobacter bemidjiensis).